A 225-amino-acid polypeptide reads, in one-letter code: Protein-L-isoaspartate O-methyltransferase (225 aa).

Serine 75 is a catalytic residue.

Belongs to the methyltransferase superfamily. L-isoaspartyl/D-aspartyl protein methyltransferase family.

It is found in the cytoplasm. The enzyme catalyses [protein]-L-isoaspartate + S-adenosyl-L-methionine = [protein]-L-isoaspartate alpha-methyl ester + S-adenosyl-L-homocysteine. Catalyzes the methyl esterification of L-isoaspartyl residues in peptides and proteins that result from spontaneous decomposition of normal L-aspartyl and L-asparaginyl residues. It plays a role in the repair and/or degradation of damaged proteins. The chain is Protein-L-isoaspartate O-methyltransferase from Xylella fastidiosa (strain 9a5c).